The sequence spans 286 residues: MERRLGVRAWVKENRGSFQPPVCNKLMHQEQLKVMFIGGPNTRKDYHIEEGEEVFYQLEGDMVLRVLEQGKHRDVVIRQGEIFLLPARVPHSPQRFANTVGLVVERRRLETELDGLRYYVGDTMDVLFEKWFYCKDLGTQLAPIIQEFFSSEQYRTGKPIPDQLLKEPPFPLSTRSIMEPMSLDAWLDSHHRELQAGTPLSLFGDTYETQVIAYGQGSSEGLRQNVDVWLWQLEGSSVVTMGGRRLSLAPDDSLLVLAGTSYAWERTQGSVALSVTQDPACKKPLG.

The segment at Met-1–Ile-160 is domain A (catalytic). Arg-43 contributes to the O2 binding site. The Fe cation site is built by His-47, Glu-53, and His-91. Glu-53 lines the substrate pocket. Positions 95 and 105 each coordinate substrate. The linker stretch occupies residues Pro-161 to Ile-177. The segment at Met-178–Gly-286 is domain B.

It belongs to the 3-HAO family. Monomer. Fe(2+) is required as a cofactor.

Its subcellular location is the cytoplasm. It is found in the cytosol. The enzyme catalyses 3-hydroxyanthranilate + O2 = (2Z,4Z)-2-amino-3-carboxymuconate 6-semialdehyde. It participates in cofactor biosynthesis; NAD(+) biosynthesis; quinolinate from L-kynurenine: step 3/3. Functionally, catalyzes the oxidative ring opening of 3-hydroxyanthranilate to 2-amino-3-carboxymuconate semialdehyde, which spontaneously cyclizes to quinolinate. The polypeptide is 3-hydroxyanthranilate 3,4-dioxygenase (Homo sapiens (Human)).